Here is a 180-residue protein sequence, read N- to C-terminus: UPF0398 protein YpsA (180 aa).

Belongs to the UPF0398 family.

In Bacillus subtilis (strain 168), this protein is UPF0398 protein YpsA (ypsA).